Here is a 262-residue protein sequence, read N- to C-terminus: Apolipoprotein A-I-1 (262 aa).

The signal sequence occupies residues 1 to 18; sequence MKFLALALTILLAAGTQA. The 3 X approximate tandem repeats stretch occupies residues 32 to 63; that stretch reads VKAALSMYIAQVKLTAQRSIDLLDDTEYKEYK. 2 repeat units span residues 64–85 and 87–107. The segment at 64–262 is 10 X approximate tandem repeats; it reads MQLTQSLDNL…YETISQAMKA (199 aa). The stretch at 108–118 is one 3; half-length repeat; that stretch reads KDVEELRSQLE. 5 tandem repeats follow at residues 119–140, 141–162, 163–184, 185–206, and 207–228. A 9; half-length repeat occupies 229–239; sequence PLSEDFKGQVG. Residues 240–262 form repeat 10; it reads PAAEQAKQKLLAFYETISQAMKA.

The protein belongs to the apolipoprotein A1/A4/E family.

It is found in the secreted. Participates in the reverse transport of cholesterol from tissues to the liver for excretion by promoting cholesterol efflux from tissues and by acting as a cofactor for the lecithin cholesterol acyltransferase (LCAT). The chain is Apolipoprotein A-I-1 from Oncorhynchus mykiss (Rainbow trout).